We begin with the raw amino-acid sequence, 80 residues long: Putative membrane protein insertion efficiency factor (80 aa).

The disordered stretch occupies residues 61 to 80 (KTGKDPVPDHFSLKRNQEGE). Basic and acidic residues predominate over residues 62–80 (TGKDPVPDHFSLKRNQEGE).

Belongs to the UPF0161 family.

Its subcellular location is the cell membrane. Functionally, could be involved in insertion of integral membrane proteins into the membrane. The polypeptide is Putative membrane protein insertion efficiency factor (Streptococcus pneumoniae serotype 2 (strain D39 / NCTC 7466)).